The sequence spans 306 residues: Elongation factor Ts (306 aa).

An involved in Mg(2+) ion dislocation from EF-Tu region spans residues 80 to 83 (TDFV).

The protein belongs to the EF-Ts family.

It is found in the cytoplasm. Functionally, associates with the EF-Tu.GDP complex and induces the exchange of GDP to GTP. It remains bound to the aminoacyl-tRNA.EF-Tu.GTP complex up to the GTP hydrolysis stage on the ribosome. This chain is Elongation factor Ts, found in Methylorubrum extorquens (strain CM4 / NCIMB 13688) (Methylobacterium extorquens).